Here is a 156-residue protein sequence, read N- to C-terminus: Myosin regulatory light chain B, smooth adductor muscle (156 aa).

Residue alanine 1 is modified to Blocked amino end (Ala). 2 consecutive EF-hand domains span residues 15-50 (KQIQEMKEAFTMIDQNRDGFIDINDLKEMFSSLGRT) and 84-119 (DTEETLRNAFAMFDELDTKKLNIEYIKDLLENMGDN). 4 residues coordinate Ca(2+): aspartate 28, asparagine 30, aspartate 32, and aspartate 39.

Functionally, in molluscan muscle, calcium regulation is associated with myosin rather than with actin. Muscle myosin contains two types of light chains: the catalytic light chain, essential for ATPase activity, and the regulatory light chain, a calcium-binding protein responsible for Ca(2+) dependent binding and Ca(2+) dependent Mg-ATPase activity. The sequence is that of Myosin regulatory light chain B, smooth adductor muscle from Mizuhopecten yessoensis (Japanese scallop).